The following is a 1410-amino-acid chain: DNA-directed RNA polymerase subunit beta' (1410 aa).

Residues cysteine 70, cysteine 72, cysteine 85, and cysteine 88 each coordinate Zn(2+). Mg(2+)-binding residues include aspartate 460, aspartate 462, and aspartate 464. Zn(2+) contacts are provided by cysteine 814, cysteine 888, cysteine 895, and cysteine 898.

This sequence belongs to the RNA polymerase beta' chain family. The RNAP catalytic core consists of 2 alpha, 1 beta, 1 beta' and 1 omega subunit. When a sigma factor is associated with the core the holoenzyme is formed, which can initiate transcription. Mg(2+) serves as cofactor. It depends on Zn(2+) as a cofactor.

It carries out the reaction RNA(n) + a ribonucleoside 5'-triphosphate = RNA(n+1) + diphosphate. DNA-dependent RNA polymerase catalyzes the transcription of DNA into RNA using the four ribonucleoside triphosphates as substrates. The chain is DNA-directed RNA polymerase subunit beta' from Saccharophagus degradans (strain 2-40 / ATCC 43961 / DSM 17024).